The following is a 161-amino-acid chain: Large ribosomal subunit protein eL21 (161 aa).

It belongs to the eukaryotic ribosomal protein eL21 family.

This Caenorhabditis elegans protein is Large ribosomal subunit protein eL21 (rpl-21).